A 143-amino-acid chain; its full sequence is Transcriptional regulator MraZ (143 aa).

SpoVT-AbrB domains lie at 5–47 (EFLH…PMDE) and 76–119 (AIEC…ANDA).

The protein belongs to the MraZ family. In terms of assembly, forms oligomers.

Its subcellular location is the cytoplasm. It is found in the nucleoid. This chain is Transcriptional regulator MraZ, found in Oceanobacillus iheyensis (strain DSM 14371 / CIP 107618 / JCM 11309 / KCTC 3954 / HTE831).